The sequence spans 206 residues: ATP-dependent Clp protease proteolytic subunit (206 aa).

S108 serves as the catalytic Nucleophile. H133 is an active-site residue.

The protein belongs to the peptidase S14 family. In terms of assembly, fourteen ClpP subunits assemble into 2 heptameric rings which stack back to back to give a disk-like structure with a central cavity, resembling the structure of eukaryotic proteasomes.

It is found in the cytoplasm. The catalysed reaction is Hydrolysis of proteins to small peptides in the presence of ATP and magnesium. alpha-casein is the usual test substrate. In the absence of ATP, only oligopeptides shorter than five residues are hydrolyzed (such as succinyl-Leu-Tyr-|-NHMec, and Leu-Tyr-Leu-|-Tyr-Trp, in which cleavage of the -Tyr-|-Leu- and -Tyr-|-Trp bonds also occurs).. In terms of biological role, cleaves peptides in various proteins in a process that requires ATP hydrolysis. Has a chymotrypsin-like activity. Plays a major role in the degradation of misfolded proteins. The sequence is that of ATP-dependent Clp protease proteolytic subunit from Chromohalobacter salexigens (strain ATCC BAA-138 / DSM 3043 / CIP 106854 / NCIMB 13768 / 1H11).